The following is a 196-amino-acid chain: Bcl-2-like protein 11 (196 aa).

A disordered region spans residues 1 to 68; sequence MAKQPSDVNS…PLAPPASPGP (68 aa). Over residues 34–43 the composition is skewed to polar residues; it reads TSLQTESQGN. Position 65 is a phosphoserine; by MAPK (serine 65). A phosphoserine mark is found at serine 73, serine 83, and serine 90. The disordered stretch occupies residues 90–114; it reads SGYFSFDTDRSPAPMSCDKSTQTPS. A BH3 motif is present at residues 146–160; that stretch reads IAQELRRIGDEFNET.

The protein belongs to the Bcl-2 family. Forms heterodimers with a number of antiapoptotic Bcl-2 proteins, including MCL1, BCL2, BCL2L1 isoform Bcl-X(L), BCL2A1/BFL-1, and BCL2L2/BCLW. Does not heterodimerize with proapoptotic proteins such as BAD, BOK or BAK. Identified in a complex containing BCL2L11, DYNLL1 and BCL2L1 isoform Bcl-X(L); BH3 integrity is required for BCL2L1-binding. Interacts with YWHAZ. When phosphorylated, interacts with TRIM2; this interaction is associated with ubiquitination and degradation. Interacts (via BH3) with MCL1; this interaction may sequester BCL2L11 and prevent its pro-apoptotic activity. When phosphorylated, isoform BimEL interacts with USP27X; this interaction leads to BCL2L11 deubiquitination and stabilization. Interacts with GIMAP5. Interacts with BCL2L10/BCL-B. Post-translationally, phosphorylation at Ser-65 by MAPK1/MAPK3 leads interaction with TRIM2 and ubiquitination, followed by proteasomal degradation. Deubiquitination catalyzed by USP27X stabilizes the protein. In terms of processing, ubiquitination by TRIM2 following phosphorylation by MAPK1/MAPK3 leads to proteasomal degradation. Conversely, deubiquitination catalyzed by USP27X stabilizes the protein. Widely expressed.

It localises to the membrane. The protein localises to the mitochondrion. Induces apoptosis and anoikis. The polypeptide is Bcl-2-like protein 11 (Bcl2l11) (Rattus norvegicus (Rat)).